The primary structure comprises 259 residues: 5'-nucleotidase SurE (259 aa).

The a divalent metal cation site is built by aspartate 8, aspartate 9, serine 40, and asparagine 92.

Belongs to the SurE nucleotidase family. It depends on a divalent metal cation as a cofactor.

It localises to the cytoplasm. The catalysed reaction is a ribonucleoside 5'-phosphate + H2O = a ribonucleoside + phosphate. Its function is as follows. Nucleotidase that shows phosphatase activity on nucleoside 5'-monophosphates. The sequence is that of 5'-nucleotidase SurE from Xanthomonas axonopodis pv. citri (strain 306).